The sequence spans 224 residues: MGSKNKLRRFKENEKFENVIQPSREELTDNVFELKGKWSENFFKNDHPIVLELGCGKGEYTVELARKNPDKNFIGIDIKGARFWRGAKTALEEGLDNVAFIRTQIELIEYVFATNEVSEIWITFPDPQIKYKRTKHRLTNTDFLQRYKNVLKQDGIMHLKTDSEFMHGYTLGLLHGEGHEILYAHHDIYKNEYSPKEVTGIQTFYENQYLENGKPITYIRFKIK.

Positions 52, 77, and 126 each coordinate S-adenosyl-L-methionine. The active site involves Asp126. 2 residues coordinate substrate: Lys130 and Asp162.

The protein belongs to the class I-like SAM-binding methyltransferase superfamily. TrmB family.

The enzyme catalyses guanosine(46) in tRNA + S-adenosyl-L-methionine = N(7)-methylguanosine(46) in tRNA + S-adenosyl-L-homocysteine. It participates in tRNA modification; N(7)-methylguanine-tRNA biosynthesis. In terms of biological role, catalyzes the formation of N(7)-methylguanine at position 46 (m7G46) in tRNA. This Christiangramia forsetii (strain DSM 17595 / CGMCC 1.15422 / KT0803) (Gramella forsetii) protein is tRNA (guanine-N(7)-)-methyltransferase.